A 360-amino-acid chain; its full sequence is Histidinol-phosphate aminotransferase (360 aa).

Position 218 is an N6-(pyridoxal phosphate)lysine (Lys-218).

It belongs to the class-II pyridoxal-phosphate-dependent aminotransferase family. Histidinol-phosphate aminotransferase subfamily. Homodimer. Pyridoxal 5'-phosphate serves as cofactor.

It catalyses the reaction L-histidinol phosphate + 2-oxoglutarate = 3-(imidazol-4-yl)-2-oxopropyl phosphate + L-glutamate. It functions in the pathway amino-acid biosynthesis; L-histidine biosynthesis; L-histidine from 5-phospho-alpha-D-ribose 1-diphosphate: step 7/9. The sequence is that of Histidinol-phosphate aminotransferase from Chlorobium phaeovibrioides (strain DSM 265 / 1930) (Prosthecochloris vibrioformis (strain DSM 265)).